We begin with the raw amino-acid sequence, 417 residues long: MAGPFSRLLSARPGLRLLALAGAGSLAAGFLLRPEPVRAASERRRLYPPSAEYPDLRKHNNCMASHLTPAVYARLCDKTTPTGWTLDQCIQTGVDNPGHPFIKTVGMVAGDEETYEVFADLFDPVIQERHNGYDPRTMKHTTDLDASKIRSGYFDERYVLSSRVRTGRSIRGLSLPPACTRAERREVERVVVDALSGLKGDLAGRYYRLSEMTEAEQQQLIDDHFLFDKPVSPLLTAAGMARDWPDARGIWHNNEKSFLIWVNEEDHTRVISMEKGGNMKRVFERFCRGLKEVERLIQERGWEFMWNERLGYILTCPSNLGTGLRAGVHIKLPLLSKDSRFPKILENLRLQKRGTGGVDTAATGGVFDISNLDRLGKSEVELVQLVIDGVNYLIDCERRLERGQDIRIPTPVIHTKH.

Residues 1–39 (MAGPFSRLLSARPGLRLLALAGAGSLAAGFLLRPEPVRA) constitute a mitochondrion transit peptide. The cardiolipin-binding stretch occupies residues 40–64 (ASERRRLYPPSAEYPDLRKHNNCMA). In terms of domain architecture, Phosphagen kinase N-terminal spans 45–131 (RLYPPSAEYP…FDPVIQERHN (87 aa)). A Phosphoserine modification is found at serine 151. Positions 158–400 (YVLSSRVRTG…NYLIDCERRL (243 aa)) constitute a Phosphagen kinase C-terminal domain. 161–165 (SSRVR) is a binding site for ATP. Serine 196 is modified (phosphoserine). Threonine 213 is subject to Phosphothreonine. Histidine 224 provides a ligand contact to ATP. Serine 232 is subject to Phosphoserine. ATP-binding positions include arginine 269, arginine 325, 353-358 (RGTGGV), and aspartate 368. The residue at position 355 (threonine 355) is a Phosphothreonine.

This sequence belongs to the ATP:guanido phosphotransferase family. In terms of assembly, exists as an octamer composed of four MTCK homodimers.

It is found in the mitochondrion inner membrane. The catalysed reaction is creatine + ATP = N-phosphocreatine + ADP + H(+). Functionally, reversibly catalyzes the transfer of phosphate between ATP and various phosphogens (e.g. creatine phosphate). Creatine kinase isoenzymes play a central role in energy transduction in tissues with large, fluctuating energy demands, such as skeletal muscle, heart, brain and spermatozoa. The polypeptide is Creatine kinase U-type, mitochondrial (CKMT1A) (Homo sapiens (Human)).